Consider the following 1235-residue polypeptide: DNA polymerase catalytic subunit (1235 aa).

2 disordered regions span residues 640-692 (QGRF…TAGR) and 1098-1134 (AAAPGDEPAPPAALPSPAKRPRETPSPADPPGGASKP). Residues 650–661 (APKRPAAAREDE) show a composition bias toward basic and acidic residues. Residues 662-675 (ERPEEEGEDEDERE) show a composition bias toward acidic residues. Over residues 676–691 (EGGGEREPEGARETAG) the composition is skewed to basic and acidic residues.

This sequence belongs to the DNA polymerase type-B family. Forms a complex with the ssDNA-binding protein UL29, the DNA polymerase processivity factor, and the alkaline exonuclease. Interacts with the putative helicase-primase complex subunit UL8; this interaction may coordinate leading and lagging strand DNA synthesis at the replication fork.

Its subcellular location is the host nucleus. The catalysed reaction is DNA(n) + a 2'-deoxyribonucleoside 5'-triphosphate = DNA(n+1) + diphosphate. It carries out the reaction Endonucleolytic cleavage to 5'-phosphomonoester.. Its function is as follows. Replicates viral genomic DNA. The replication complex is composed of six viral proteins: the DNA polymerase, processivity factor, primase, primase-associated factor, helicase, and ssDNA-binding protein. Additionally, the polymerase contains an intrinsic ribonuclease H (RNase H) activity that specifically degrades RNA/DNA heteroduplexes or duplex DNA substrates in the 5' to 3' direction. Therefore, it can catalyze the excision of the RNA primers that initiate the synthesis of Okazaki fragments at a replication fork during viral DNA replication. The polypeptide is DNA polymerase catalytic subunit (Homo sapiens (Human)).